The following is a 391-amino-acid chain: Polyketide synthase 1 (391 aa).

Cysteine 164 is an active-site residue.

The protein belongs to the thiolase-like superfamily. Chalcone/stilbene synthases family. As to quaternary structure, homodimer. In terms of tissue distribution, expressed in fruits.

The catalysed reaction is (E)-4-coumaroyl-CoA + 3 malonyl-CoA + 3 H(+) = 2',4,4',6'-tetrahydroxychalcone + 3 CO2 + 4 CoA. Its pathway is secondary metabolite biosynthesis; flavonoid biosynthesis. In terms of biological role, polyketide synthase producing naringenin chalcone and slightly p-coumaryltriacetic acid lactone (CTAL). Can use p-coumaryl-CoA as substrate. The sequence is that of Polyketide synthase 1 (PKS1) from Rubus idaeus (Raspberry).